The primary structure comprises 550 residues: tRNA modification GTPase MnmE (550 aa).

(6S)-5-formyl-5,6,7,8-tetrahydrofolate-binding residues include arginine 20, glutamate 78, and arginine 116. The region spanning 212–478 (GFSVVIVGKP…LLDKIFDIIS (267 aa)) is the TrmE-type G domain. Position 222 (asparagine 222) interacts with K(+). GTP contacts are provided by residues 222–227 (NVGKST), 241–247 (TDIPGTT), and 266–269 (DTAG). Serine 226 contributes to the Mg(2+) binding site. 3 residues coordinate K(+): threonine 241, isoleucine 243, and threonine 246. Residue threonine 247 participates in Mg(2+) binding. Lysine 550 contacts (6S)-5-formyl-5,6,7,8-tetrahydrofolate.

It belongs to the TRAFAC class TrmE-Era-EngA-EngB-Septin-like GTPase superfamily. TrmE GTPase family. As to quaternary structure, homodimer. Heterotetramer of two MnmE and two MnmG subunits. K(+) is required as a cofactor.

The protein localises to the cytoplasm. Its function is as follows. Exhibits a very high intrinsic GTPase hydrolysis rate. Involved in the addition of a carboxymethylaminomethyl (cmnm) group at the wobble position (U34) of certain tRNAs, forming tRNA-cmnm(5)s(2)U34. The polypeptide is tRNA modification GTPase MnmE (Neorickettsia sennetsu (strain ATCC VR-367 / Miyayama) (Ehrlichia sennetsu)).